A 306-amino-acid chain; its full sequence is Protoheme IX farnesyltransferase (306 aa).

The next 9 helical transmembrane spans lie at 32–52 (VVQLIVFCAFIGMVLAVPGMP), 57–77 (WALMAVASAGIWLVAGAAAAF), 108–128 (LLFSALLCAAGSALLYWWVNP), 129–149 (LTMWLTFATFVGYAVIYTVIL), 157–177 (IVIGGASGAMPPVLGWAAMTG), 183–203 (ALILFLIIFLWTPPHFWALAL), 230–250 (VFLYTLILFAGCLMPFVYGMS), 252–272 (WIYLAAAVVLSAGFCLYGFRL), and 285–305 (FRFSLIHLSLLFAALLVDHYL).

This sequence belongs to the UbiA prenyltransferase family. Protoheme IX farnesyltransferase subfamily.

It localises to the cell inner membrane. The catalysed reaction is heme b + (2E,6E)-farnesyl diphosphate + H2O = Fe(II)-heme o + diphosphate. It functions in the pathway porphyrin-containing compound metabolism; heme O biosynthesis; heme O from protoheme: step 1/1. Its function is as follows. Converts heme B (protoheme IX) to heme O by substitution of the vinyl group on carbon 2 of heme B porphyrin ring with a hydroxyethyl farnesyl side group. This chain is Protoheme IX farnesyltransferase, found in Acidovorax ebreus (strain TPSY) (Diaphorobacter sp. (strain TPSY)).